The following is a 110-amino-acid chain: Large ribosomal subunit protein uL22 (110 aa).

This sequence belongs to the universal ribosomal protein uL22 family. Part of the 50S ribosomal subunit.

This protein binds specifically to 23S rRNA; its binding is stimulated by other ribosomal proteins, e.g. L4, L17, and L20. It is important during the early stages of 50S assembly. It makes multiple contacts with different domains of the 23S rRNA in the assembled 50S subunit and ribosome. Functionally, the globular domain of the protein is located near the polypeptide exit tunnel on the outside of the subunit, while an extended beta-hairpin is found that lines the wall of the exit tunnel in the center of the 70S ribosome. In Hahella chejuensis (strain KCTC 2396), this protein is Large ribosomal subunit protein uL22.